The primary structure comprises 238 residues: Uridylate kinase (238 aa).

An ATP-binding site is contributed by 12–15; sequence KLSG. Gly54 contributes to the UMP binding site. Residues Gly55 and Arg59 each contribute to the ATP site. UMP-binding positions include Asp74 and 135–142; that span reads TGNPYFTT. ATP is bound by residues Thr162, Tyr168, and Asp171.

This sequence belongs to the UMP kinase family. In terms of assembly, homohexamer.

Its subcellular location is the cytoplasm. It carries out the reaction UMP + ATP = UDP + ADP. Its pathway is pyrimidine metabolism; CTP biosynthesis via de novo pathway; UDP from UMP (UMPK route): step 1/1. With respect to regulation, inhibited by UTP. In terms of biological role, catalyzes the reversible phosphorylation of UMP to UDP. The polypeptide is Uridylate kinase (Nitratidesulfovibrio vulgaris (strain ATCC 29579 / DSM 644 / CCUG 34227 / NCIMB 8303 / VKM B-1760 / Hildenborough) (Desulfovibrio vulgaris)).